We begin with the raw amino-acid sequence, 447 residues long: MKPSVATLLATVSLVYAQTATEKEPSLSAIESAAASIQPYSPVSNVEGVAFNRFFQVWLENIDYEDAAADENMKWLASQGILLTNFYAVTHPSEPNYCAAVGGDTFGMDNDNFNQIPANVSTVADLLDTKNIAWGEYQEHLPYPGFQGFNYSNQETYVNDYVRKHNPLVLYDSVTKNSTRLRQIKNFTSFEDDLANKKLPQWAFITPNMTNDAHDTNITFGAKWERSWIAPLLNNSYFMNDTLILLTFDEDGTYSKSNKIFSVLLGGAIPDELKGTQDDTFYTHYSVIASVSANWGLPSLGRWDCGANILEIVANKTGYVNYDVDTTNLRLNETYPGPMSAGEYSKYSPVWPNALTRGDCSAGHGILDIVKETYANTEPTYNYSSPFPYDTASNYNTKVTATKKNVTGTHRSSSSSSPSASSNAAVSAVAPAAGVSGLLLGLALNLL.

The first 17 residues, 1 to 17 (MKPSVATLLATVSLVYA), serve as a signal peptide directing secretion. N-linked (GlcNAc...) asparagine glycosylation is found at Asn-119, Asn-150, Asn-177, Asn-186, and Asn-208. The active-site Proton donor is the Asp-215. 7 N-linked (GlcNAc...) asparagine glycosylation sites follow: Asn-217, Asn-234, Asn-240, Asn-315, Asn-332, Asn-382, and Asn-405. Residue Ser-419 is the site of GPI-like-anchor amidated serine attachment. A propeptide spans 420-447 (ASSNAAVSAVAPAAGVSGLLLGLALNLL) (removed in mature form).

In terms of processing, the GPI-like anchor contains a phosphoceramide lipid group. The anchor position has not been determined.

The protein localises to the cell membrane. The catalysed reaction is a phosphate monoester + H2O = an alcohol + phosphate. Its activity is regulated as follows. Inhibited by NaF, molybdate and vanadate. Has both phosphomonoesterase and phosphodiesterase activity. Cleaves a broad range of phosphate esters. The chain is Acid phosphatase (phoA) from Aspergillus fumigatus (strain ATCC MYA-4609 / CBS 101355 / FGSC A1100 / Af293) (Neosartorya fumigata).